Consider the following 748-residue polypeptide: Catalase-peroxidase 2 (748 aa).

Residues 1 to 24 are compositionally biased toward polar residues; that stretch reads MSSDTSDSRPPNPDTKTASTSESE. The interval 1–43 is disordered; the sequence is MSSDTSDSRPPNPDTKTASTSESENPAIPSPKPKSGAPLRNQD. The tryptophyl-tyrosyl-methioninium (Trp-Tyr) (with M-264) cross-link spans 113–238; it reads WHSAGTYRIH…YGATTMGLIY (126 aa). His114 (proton acceptor) is an active-site residue. The segment at residues 238–264 is a cross-link (tryptophyl-tyrosyl-methioninium (Tyr-Met) (with W-113)); the sequence is YVNPEGPEGQPDPLAAAHDIRETFGRM. His279 contacts heme b.

The protein belongs to the peroxidase family. Peroxidase/catalase subfamily. Homotetramer. Requires heme b as cofactor. Formation of the three residue Trp-Tyr-Met cross-link is important for the catalase, but not the peroxidase activity of the enzyme.

It carries out the reaction H2O2 + AH2 = A + 2 H2O. The enzyme catalyses 2 H2O2 = O2 + 2 H2O. Its function is as follows. Bifunctional enzyme with both catalase and broad-spectrum peroxidase activity. May play a role in the intracellular survival of mycobacteria. The sequence is that of Catalase-peroxidase 2 from Mycolicibacterium smegmatis (strain ATCC 700084 / mc(2)155) (Mycobacterium smegmatis).